Reading from the N-terminus, the 455-residue chain is Eukaryotic translation initiation factor 3 subunit E (455 aa).

The PCI domain maps to 256–425 (TDLFFSPAYI…GTVIMNHPPQ (170 aa)).

This sequence belongs to the eIF-3 subunit E family. In terms of assembly, component of the eukaryotic translation initiation factor 3 (eIF-3) complex.

It localises to the cytoplasm. Its function is as follows. Component of the eukaryotic translation initiation factor 3 (eIF-3) complex, which is involved in protein synthesis of a specialized repertoire of mRNAs and, together with other initiation factors, stimulates binding of mRNA and methionyl-tRNAi to the 40S ribosome. The eIF-3 complex specifically targets and initiates translation of a subset of mRNAs involved in cell proliferation. This chain is Eukaryotic translation initiation factor 3 subunit E (int6), found in Neosartorya fischeri (strain ATCC 1020 / DSM 3700 / CBS 544.65 / FGSC A1164 / JCM 1740 / NRRL 181 / WB 181) (Aspergillus fischerianus).